The sequence spans 100 residues: Large ribosomal subunit protein uL23 (100 aa).

The protein belongs to the universal ribosomal protein uL23 family. In terms of assembly, part of the 50S ribosomal subunit. Contacts protein L29, and trigger factor when it is bound to the ribosome.

One of the early assembly proteins it binds 23S rRNA. One of the proteins that surrounds the polypeptide exit tunnel on the outside of the ribosome. Forms the main docking site for trigger factor binding to the ribosome. The polypeptide is Large ribosomal subunit protein uL23 (Mycolicibacterium smegmatis (strain ATCC 700084 / mc(2)155) (Mycobacterium smegmatis)).